The sequence spans 311 residues: Cytosolic Fe-S cluster assembly factor Nubp1 homolog (311 aa).

The interval 1-20 (MQAPPPEHCPGVESENAGKG) is disordered. [4Fe-4S] cluster contacts are provided by Cys9, Cys23, Cys26, and Cys32. 63 to 70 (GKGGVGKS) contributes to the ATP binding site. [4Fe-4S] cluster contacts are provided by Cys240 and Cys243.

The protein belongs to the Mrp/NBP35 ATP-binding proteins family. NUBP1/NBP35 subfamily. In terms of assembly, heterotetramer of 2 Nubp1 and 2 Nubp2 chains. The cofactor is [4Fe-4S] cluster.

It localises to the cytoplasm. Its function is as follows. Component of the cytosolic iron-sulfur (Fe/S) protein assembly (CIA) machinery. Required for maturation of extramitochondrial Fe-S proteins. The Nubp1-Nubp2 heterotetramer forms a Fe-S scaffold complex, mediating the de novo assembly of an Fe-S cluster and its transfer to target apoproteins. This Drosophila simulans (Fruit fly) protein is Cytosolic Fe-S cluster assembly factor Nubp1 homolog.